Consider the following 127-residue polypeptide: uncharacterized protein (127 aa).

Residues 69–94 (GDGGSVPEKGKHGILGAQGQEHPGLN) are disordered.

This is an uncharacterized protein from Homo sapiens (Human).